We begin with the raw amino-acid sequence, 671 residues long: UvrABC system protein B (671 aa).

One can recognise a Helicase ATP-binding domain in the interval Lys-31–Asn-189. Gly-44–Thr-51 contacts ATP. Residues Tyr-97–Ile-120 carry the Beta-hairpin motif. One can recognise a Helicase C-terminal domain in the interval Gln-437 to Ile-599. The 36-residue stretch at Lys-634–Asp-669 folds into the UVR domain.

This sequence belongs to the UvrB family. Forms a heterotetramer with UvrA during the search for lesions. Interacts with UvrC in an incision complex.

It is found in the cytoplasm. In terms of biological role, the UvrABC repair system catalyzes the recognition and processing of DNA lesions. A damage recognition complex composed of 2 UvrA and 2 UvrB subunits scans DNA for abnormalities. Upon binding of the UvrA(2)B(2) complex to a putative damaged site, the DNA wraps around one UvrB monomer. DNA wrap is dependent on ATP binding by UvrB and probably causes local melting of the DNA helix, facilitating insertion of UvrB beta-hairpin between the DNA strands. Then UvrB probes one DNA strand for the presence of a lesion. If a lesion is found the UvrA subunits dissociate and the UvrB-DNA preincision complex is formed. This complex is subsequently bound by UvrC and the second UvrB is released. If no lesion is found, the DNA wraps around the other UvrB subunit that will check the other stand for damage. The sequence is that of UvrABC system protein B from Lacticaseibacillus casei (strain BL23) (Lactobacillus casei).